Here is a 260-residue protein sequence, read N- to C-terminus: Flap endonuclease Xni (260 aa).

Asp112 is a Mg(2+) binding site. The 5'-3' exonuclease domain maps to 168 to 258; the sequence is LQPSQLVDFW…FNLKDLRYTP (91 aa). K(+) is bound by residues Leu179, Val190, and Ile193. The interaction with DNA stretch occupies residues 192 to 197; it reads GIGEKT.

The protein belongs to the Xni family. Requires Mg(2+) as cofactor. It depends on K(+) as a cofactor.

Has flap endonuclease activity. During DNA replication, flap endonucleases cleave the 5'-overhanging flap structure that is generated by displacement synthesis when DNA polymerase encounters the 5'-end of a downstream Okazaki fragment. In Tolumonas auensis (strain DSM 9187 / NBRC 110442 / TA 4), this protein is Flap endonuclease Xni.